The sequence spans 772 residues: Subtilisin-like protease SBT5.3 (772 aa).

The first 25 residues, 1-25 (MKLTHNFSFLLLLLLVHMSSKHILA), serve as a signal peptide directing secretion. An Inhibitor I9 domain is found at 31-116 (SYVVYFGAHS…VFPNKALKLH (86 aa)). One can recognise a Peptidase S8 domain in the interval 120-628 (SWDFLGLEHN…AGHVQPNLAV (509 aa)). The active-site Charge relay system is the Asp-153. An N-linked (GlcNAc...) asparagine glycan is attached at Asn-211. The active-site Charge relay system is the His-223. 3 N-linked (GlcNAc...) asparagine glycosylation sites follow: Asn-246, Asn-306, and Asn-396. The region spanning 398 to 480 (SALDAQLCKL…KDSFAVSRYI (83 aa)) is the PA domain. The active-site Charge relay system is Ser-561. N-linked (GlcNAc...) asparagine glycans are attached at residues Asn-606, Asn-651, Asn-662, Asn-684, and Asn-725.

It belongs to the peptidase S8 family. Expressed specifically at sites of lateral root emergence.

Its subcellular location is the secreted. The protein resides in the cell wall. Serine protease. Has a substrate preference for the hydrophobic residues Phe and Ala and the basic residue Asp in the P1 position, and for Asp, Leu or Ala in the P1' position. May play a role in the degradation of structural proteins in the extracellular matrix of cells located above sites of lateral root formation and thus facilitate lateral root emergence. The protein is Subtilisin-like protease SBT5.3 (AIR3) of Arabidopsis thaliana (Mouse-ear cress).